A 355-amino-acid polypeptide reads, in one-letter code: Glutamine synthetase root isozyme 4 (355 aa).

The GS beta-grasp domain maps to 19–99 (IIAEYIWIGG…VMCDCYTPAG (81 aa)). Residues 37 to 66 (ARTLPGPVTDPSKLPKWNYDGSSTGQAPGE) form a disordered region. Residues 106–355 (KRYSAAKIFS…IAETTIVWKP (250 aa)) enclose the GS catalytic domain.

The protein belongs to the glutamine synthetase family. Homooctamer. In terms of tissue distribution, found in all the tissues examined with higher expression found in tissues of the root, stem and seedling shoot.

The protein resides in the cytoplasm. The enzyme catalyses L-glutamate + NH4(+) + ATP = L-glutamine + ADP + phosphate + H(+). In terms of biological role, plays a role in the flow of nitrogen into nitrogenous organic compounds. This chain is Glutamine synthetase root isozyme 4 (GLN5), found in Zea mays (Maize).